Consider the following 378-residue polypeptide: MEEYEVTTKDSGSGLSVIVAGGGTAGHIEPALAVADALRRLDPAIRVTALGTERGLETRLVPERGYPLELIPPVPLPRKPTVDLLRLPARVRASVRRTRAVIDAVQADVIIGFGGYVALPAYLAAGRGVLRRRRAVPVIVHEANAKAGIANKIGARVARAVLAAVPDSGLPGAEVVGIPVRESITALDRTALRAEARAHFGLPDAGPVLLVFGGSQGARSLNEAIAGAAPQLAAAGISVLHAHGPKNTLDVPETGGTARYVAVPYLSRMDLAYAAADAVVCRSGAMTVAEVSAVGLPAFYVPLPHGNGEQEFNARPIVAQGGGRIVPDSELTPKYVIDEVIPLLLDRTRLTEMGRAAAGAGHRDAADEVARIAVRVAR.

Residues 24-26 (TAG), Asn-144, Arg-181, Ser-215, and Gln-310 contribute to the UDP-N-acetyl-alpha-D-glucosamine site.

The protein belongs to the glycosyltransferase 28 family. MurG subfamily.

It is found in the cell membrane. The enzyme catalyses di-trans,octa-cis-undecaprenyl diphospho-N-acetyl-alpha-D-muramoyl-L-alanyl-D-glutamyl-meso-2,6-diaminopimeloyl-D-alanyl-D-alanine + UDP-N-acetyl-alpha-D-glucosamine = di-trans,octa-cis-undecaprenyl diphospho-[N-acetyl-alpha-D-glucosaminyl-(1-&gt;4)]-N-acetyl-alpha-D-muramoyl-L-alanyl-D-glutamyl-meso-2,6-diaminopimeloyl-D-alanyl-D-alanine + UDP + H(+). It participates in cell wall biogenesis; peptidoglycan biosynthesis. Its function is as follows. Cell wall formation. Catalyzes the transfer of a GlcNAc subunit on undecaprenyl-pyrophosphoryl-MurNAc-pentapeptide (lipid intermediate I) to form undecaprenyl-pyrophosphoryl-MurNAc-(pentapeptide)GlcNAc (lipid intermediate II). The protein is UDP-N-acetylglucosamine--N-acetylmuramyl-(pentapeptide) pyrophosphoryl-undecaprenol N-acetylglucosamine transferase of Nocardia farcinica (strain IFM 10152).